The primary structure comprises 363 residues: UDP-N-acetylglucosamine--N-acetylmuramyl-(pentapeptide) pyrophosphoryl-undecaprenol N-acetylglucosamine transferase (363 aa).

UDP-N-acetyl-alpha-D-glucosamine-binding positions include 14 to 16 (TGG), Arg-171, Ser-200, and Gln-290.

Belongs to the glycosyltransferase 28 family. MurG subfamily.

It localises to the cell inner membrane. It carries out the reaction di-trans,octa-cis-undecaprenyl diphospho-N-acetyl-alpha-D-muramoyl-L-alanyl-D-glutamyl-meso-2,6-diaminopimeloyl-D-alanyl-D-alanine + UDP-N-acetyl-alpha-D-glucosamine = di-trans,octa-cis-undecaprenyl diphospho-[N-acetyl-alpha-D-glucosaminyl-(1-&gt;4)]-N-acetyl-alpha-D-muramoyl-L-alanyl-D-glutamyl-meso-2,6-diaminopimeloyl-D-alanyl-D-alanine + UDP + H(+). It participates in cell wall biogenesis; peptidoglycan biosynthesis. Cell wall formation. Catalyzes the transfer of a GlcNAc subunit on undecaprenyl-pyrophosphoryl-MurNAc-pentapeptide (lipid intermediate I) to form undecaprenyl-pyrophosphoryl-MurNAc-(pentapeptide)GlcNAc (lipid intermediate II). The polypeptide is UDP-N-acetylglucosamine--N-acetylmuramyl-(pentapeptide) pyrophosphoryl-undecaprenol N-acetylglucosamine transferase (Borreliella afzelii (strain PKo) (Borrelia afzelii)).